Reading from the N-terminus, the 843-residue chain is Protein P (843 aa).

The segment at 1 to 177 (MPLSYQHFRK…FCGSPYSWEQ (177 aa)) is terminal protein domain (TP). Residues 178–346 (DLQHGRLVFQ…YCLCHIVNLI (169 aa)) form a spacer region. 2 disordered regions span residues 220–269 (KSRL…HNCA) and 291–316 (TSKG…RSRS). A polymerase/reverse transcriptase domain (RT) region spans residues 347-690 (EDWGPCTEHG…YLNLYPVARQ (344 aa)). The region spanning 357 to 600 (EHRIRTPRTP…YSLNFMGYVI (244 aa)) is the Reverse transcriptase domain. Mg(2+) contacts are provided by Asp429, Asp551, and Asp552.

The protein belongs to the hepadnaviridae P protein family.

The catalysed reaction is DNA(n) + a 2'-deoxyribonucleoside 5'-triphosphate = DNA(n+1) + diphosphate. It carries out the reaction Endonucleolytic cleavage to 5'-phosphomonoester.. Its activity is regulated as follows. Activated by host HSP70 and HSP40 in vitro to be able to bind the epsilon loop of the pgRNA. Because deletion of the RNase H region renders the protein partly chaperone-independent, the chaperones may be needed indirectly to relieve occlusion of the RNA-binding site by this domain. Inhibited by several reverse-transcriptase inhibitors: Lamivudine, Adefovir and Entecavir. In terms of biological role, multifunctional enzyme that converts the viral RNA genome into dsDNA in viral cytoplasmic capsids. This enzyme displays a DNA polymerase activity that can copy either DNA or RNA templates, and a ribonuclease H (RNase H) activity that cleaves the RNA strand of RNA-DNA heteroduplexes in a partially processive 3'- to 5'-endonucleasic mode. Neo-synthesized pregenomic RNA (pgRNA) are encapsidated together with the P protein, and reverse-transcribed inside the nucleocapsid. Initiation of reverse-transcription occurs first by binding the epsilon loop on the pgRNA genome, and is initiated by protein priming, thereby the 5'-end of (-)DNA is covalently linked to P protein. Partial (+)DNA is synthesized from the (-)DNA template and generates the relaxed circular DNA (RC-DNA) genome. After budding and infection, the RC-DNA migrates in the nucleus, and is converted into a plasmid-like covalently closed circular DNA (cccDNA). The activity of P protein does not seem to be necessary for cccDNA generation, and is presumably released from (+)DNA by host nuclear DNA repair machinery. This Homo sapiens (Human) protein is Protein P.